The sequence spans 1375 residues: DNA-directed RNA polymerase subunit beta (1375 aa).

The protein belongs to the RNA polymerase beta chain family. The RNAP catalytic core consists of 2 alpha, 1 beta, 1 beta' and 1 omega subunit. When a sigma factor is associated with the core the holoenzyme is formed, which can initiate transcription.

It catalyses the reaction RNA(n) + a ribonucleoside 5'-triphosphate = RNA(n+1) + diphosphate. Its function is as follows. DNA-dependent RNA polymerase catalyzes the transcription of DNA into RNA using the four ribonucleoside triphosphates as substrates. In Methylibium petroleiphilum (strain ATCC BAA-1232 / LMG 22953 / PM1), this protein is DNA-directed RNA polymerase subunit beta.